We begin with the raw amino-acid sequence, 330 residues long: Interleukin-12 subunit beta (330 aa).

Positions 1–22 (MHPQQLVVSWFSLVLLASPIMA) are cleaved as a signal peptide. Positions 23-106 (IWELEKNVYV…LSHSLLLLHK (84 aa)) constitute an Ig-like C2-type domain. Cysteines 50 and 90 form a disulfide. N-linked (GlcNAc...) asparagine glycosylation is found at Asn136 and Asn224. A Fibronectin type-III domain is found at 239-330 (PPKNLQLKPL…WSEWASVSCS (92 aa)).

This sequence belongs to the IL-12B family. As to quaternary structure, heterodimer with IL12A; disulfide-linked. The heterodimer is known as interleukin IL-12. Heterodimer with IL23A; disulfide-linked. The heterodimer is known as interleukin IL-23. Also secreted as a monomer. Interacts with NBR1; this interaction promotes IL-12 secretion.

The protein localises to the secreted. Cytokine that can act as a growth factor for activated T and NK cells, enhance the lytic activity of NK/lymphokine-activated killer cells, and stimulate the production of IFN-gamma by resting PBMC. Its function is as follows. Associates with IL23A to form the IL-23 interleukin, a heterodimeric cytokine which functions in innate and adaptive immunity. IL-23 may constitute with IL-17 an acute response to infection in peripheral tissues. IL-23 binds to a heterodimeric receptor complex composed of IL12RB1 and IL23R, activates the Jak-Stat signaling cascade, stimulates memory rather than naive T-cells and promotes production of pro-inflammatory cytokines. IL-23 induces autoimmune inflammation and thus may be responsible for autoimmune inflammatory diseases and may be important for tumorigenesis. This Lama glama (Llama) protein is Interleukin-12 subunit beta (IL12B).